The chain runs to 814 residues: Dimethyl sulfoxide reductase DmsA (814 aa).

Residues 1–45 (MKTKIPDAVLAAEVSRRGLVKTTAIGGLAMASSALTLPFSRIAHA) constitute a signal peptide (tat-type signal). Positions 56–118 (EKVIWSACTV…SMRRRVYNPD (63 aa)) constitute a 4Fe-4S Mo/W bis-MGD-type domain. Residues Cys-63, Cys-67, Cys-71, and Cys-104 each coordinate [4Fe-4S] cluster. Mo-bis(molybdopterin guanine dinucleotide) is bound by residues 172–176 (LGGTM), Ser-205, 244–245 (ET), 270–271 (ID), 291–293 (GTD), 386–387 (WG), Arg-390, Asn-488, 512–513 (ID), His-701, 707–709 (HST), Asn-788, and 804–805 (SH).

It belongs to the prokaryotic molybdopterin-containing oxidoreductase family. Heterotrimeric enzyme composed of a catalytic heterodimer (DmsAB) and a membrane anchor protein (DmsC). It depends on [4Fe-4S] cluster as a cofactor. Requires Mo-bis(molybdopterin guanine dinucleotide) as cofactor. Post-translationally, exported by the Tat system. The position of the signal peptide cleavage has been experimentally proven. Can also be exported by the Sec system.

It localises to the cell membrane. It carries out the reaction dimethyl sulfide + a menaquinone + H2O = dimethyl sulfoxide + a menaquinol. With respect to regulation, inhibited by dithionite, sodium hydrogensulfite and tungstate. Functionally, catalyzes the reduction of dimethyl sulfoxide (DMSO) to dimethyl sulfide (DMS). DMSO reductase serves as the terminal reductase under anaerobic conditions, with DMSO being the terminal electron acceptor. Terminal reductase during anaerobic growth on various sulfoxides and N-oxide compounds. Allows E.coli to grow anaerobically on DMSO as respiratory oxidant. The sequence is that of Dimethyl sulfoxide reductase DmsA (dmsA) from Escherichia coli (strain K12).